Here is a 166-residue protein sequence, read N- to C-terminus: Large ribosomal subunit protein uL10 (166 aa).

Belongs to the universal ribosomal protein uL10 family. In terms of assembly, part of the ribosomal stalk of the 50S ribosomal subunit. The N-terminus interacts with L11 and the large rRNA to form the base of the stalk. The C-terminus forms an elongated spine to which L12 dimers bind in a sequential fashion forming a multimeric L10(L12)X complex.

Functionally, forms part of the ribosomal stalk, playing a central role in the interaction of the ribosome with GTP-bound translation factors. The protein is Large ribosomal subunit protein uL10 of Listeria innocua serovar 6a (strain ATCC BAA-680 / CLIP 11262).